Reading from the N-terminus, the 966-residue chain is Alpha-1,4 glucan phosphorylase L-1 isozyme, chloroplastic/amyloplastic (966 aa).

A chloroplast-targeting transit peptide spans 1–50 (MATANGAHLFNHYSSNSRFIHFTSRNTSSKLFLTKTSHFRRPKRCFHVNN). An N6-(pyridoxal phosphate)lysine modification is found at Lys-812.

Belongs to the glycogen phosphorylase family. It depends on pyridoxal 5'-phosphate as a cofactor. Tuber.

It localises to the plastid. Its subcellular location is the chloroplast. It is found in the amyloplast. The catalysed reaction is [(1-&gt;4)-alpha-D-glucosyl](n) + phosphate = [(1-&gt;4)-alpha-D-glucosyl](n-1) + alpha-D-glucose 1-phosphate. Phosphorylase is an important allosteric enzyme in carbohydrate metabolism. Enzymes from different sources differ in their regulatory mechanisms and in their natural substrates. However, all known phosphorylases share catalytic and structural properties. The protein is Alpha-1,4 glucan phosphorylase L-1 isozyme, chloroplastic/amyloplastic of Solanum tuberosum (Potato).